Consider the following 335-residue polypeptide: 2-acylglycerol O-acyltransferase 2 (335 aa).

2 consecutive transmembrane segments (helical) span residues 24–44 and 104–124; these read WAVS…LLLF and YIMG…NFCT. Asn-206 carries N-linked (GlcNAc...) asparagine glycosylation.

It belongs to the diacylglycerol acyltransferase family.

It is found in the endoplasmic reticulum membrane. The protein localises to the cytoplasm. It localises to the perinuclear region. It catalyses the reaction a 2-acylglycerol + an acyl-CoA = a 1,2-diacylglycerol + CoA. It carries out the reaction a 2-acylglycerol + an acyl-CoA = a 1,2-diacyl-sn-glycerol + CoA. The enzyme catalyses a 2-acylglycerol + an acyl-CoA = a 2,3-diacyl-sn-glycerol + CoA. The catalysed reaction is a 1-acylglycerol + an acyl-CoA = a 1,2-diacylglycerol + CoA. It catalyses the reaction a 1-acylglycerol + an acyl-CoA = a 1,3-diacylglycerol + CoA. It carries out the reaction 1-O-alkylglycerol + an acyl-CoA = 1-O-alkyl-3-acylglycerol + CoA. The enzyme catalyses an acyl-CoA + a 1,2-diacyl-sn-glycerol = a triacyl-sn-glycerol + CoA. The protein operates within glycerolipid metabolism; triacylglycerol biosynthesis. Involved in glycerolipid synthesis and lipid metabolism. Catalyzes the formation of diacylglycerol, the precursor of triacylglycerol, by transferring the acyl chain of a fatty acyl-CoA to a monoacylglycerol. Plays a central role in absorption of dietary fat in the small intestine by catalyzing the resynthesis of triacylglycerol in enterocytes. Has a preference toward monoacylglycerols containing unsaturated fatty acids in an order of C18:3 &gt; C18:2 &gt; C18:1 &gt; C18:0 at sn-2. Able to use 1-monoalkylglycerol (1-MAkG, 1-O-alkylglycerol) as an acyl acceptor for the synthesis of monoalkyl-monoacylglycerol (MAMAG, 1-O-alkyl-3-acylglycerol or 1-O-alkyl-2-acylglycerol) and subsequently, with lower efficiency, may add another acyl chain producing monoalkyl-diacylglycerol (MADAG, 1-O-alkyl-2,3-diacylglycerol). Possesses weak but significant activity with diacylglycerol as substrate, producing triacylglycerol (triacyl-sn-glycerol). The protein is 2-acylglycerol O-acyltransferase 2 (mogat2) of Xenopus tropicalis (Western clawed frog).